The following is a 490-amino-acid chain: tRNA-guanine(15) transglycosylase (490 aa).

Asp90 (nucleophile) is an active-site residue. Substrate contacts are provided by Asp125 and Ala193. Residues Cys276, Cys278, and Cys281 each coordinate Zn(2+).

This sequence belongs to the archaeosine tRNA-ribosyltransferase family. Zn(2+) is required as a cofactor.

The catalysed reaction is guanosine(15) in tRNA + 7-cyano-7-deazaguanine = 7-cyano-7-carbaguanosine(15) in tRNA + guanine. It functions in the pathway tRNA modification; archaeosine-tRNA biosynthesis. Exchanges the guanine residue with 7-cyano-7-deazaguanine (preQ0) at position 15 in the dihydrouridine loop (D-loop) of archaeal tRNAs. This chain is tRNA-guanine(15) transglycosylase, found in Methanosarcina barkeri (strain Fusaro / DSM 804).